A 99-amino-acid chain; its full sequence is Carboxysome shell vertex protein CcmL (99 aa).

Positions 1-83 constitute a BMV domain; sequence MRIAKVRGTV…VDAAVIAIID (83 aa).

It belongs to the CcmL/EutN family. CcmL subfamily. Homopentamer. Interacts with full-length CcmM.

It localises to the carboxysome. Probably forms vertices in the carboxysome, a polyhedral inclusion where RuBisCO (ribulose bisphosphate carboxylase, rbcL-rbcS) is sequestered. Has been modeled to induce curvature upon insertion into an otherwise flat hexagonal molecular layer of CcmK subunits. In terms of biological role, beta-carboxysome assembly initiates when soluble RuBisCO is condensed into a liquid matrix in a pre-carboxysome by the RbcS-like domains of probably both CcmM58 and CcmM35. CcmN interacts with the N-terminus of CcmM58, and then recruits the CcmK2 major shell protein via CcmN's encapsulation peptide. Shell formation requires CcmK proteins and CcmO. CcmL caps the otherwise elongated carboxysome. Once fully encapsulated carboxysomes are formed, they migrate within the cell probably via interactions with the cytoskeleton. The protein is Carboxysome shell vertex protein CcmL of Synechococcus elongatus (strain ATCC 33912 / PCC 7942 / FACHB-805) (Anacystis nidulans R2).